We begin with the raw amino-acid sequence, 274 residues long: Nickel/cobalt efflux system RcnA (274 aa).

Residues 1 to 12 lie on the Periplasmic side of the membrane; the sequence is MTEFTTLLQQGN. A helical transmembrane segment spans residues 13–33; the sequence is AWFFIPSVILLGALHGLEPGH. Residues 34–56 are Cytoplasmic-facing; that stretch reads SKTMMAAFIIAIKGTIKQAVMLG. A helical transmembrane segment spans residues 57 to 77; that stretch reads LAATISHTAVVWLIAFGGMVI. Residues 78-86 are Periplasmic-facing; that stretch reads SKRFTAQSA. A helical transmembrane segment spans residues 87–107; it reads EPWLQLISAVIIISTAFWMFW. Over 108 to 174 the chain is Cytoplasmic; sequence RTWRGERNWL…FDGREVTNWQ (67 aa). A disordered region spans residues 127–153; that stretch reads HHHHDHEHHHDHGHHHHHEHGEYQDAH. Basic residues predominate over residues 129-144; it reads HHDHEHHHDHGHHHHH. Residues 175-195 form a helical membrane-spanning segment; the sequence is ILLFGLTGGLIPCPAAITVLL. Residues 196–209 lie on the Periplasmic side of the membrane; sequence ICIQLKALTLGATL. Residues 210–230 traverse the membrane as a helical segment; that stretch reads VVSFSIGLALTLVTVGVGAAI. At 231-251 the chain is on the cytoplasmic side; the sequence is SVQQVAKRWSGFNTLAKRAPY. Residues 252–272 form a helical membrane-spanning segment; it reads FSSLLIGLVGVYMGVHGFMGI. Topologically, residues 273 to 274 are periplasmic; that stretch reads MR.

This sequence belongs to the NiCoT transporter (TC 2.A.52) family. RcnA subfamily.

Its subcellular location is the cell inner membrane. In terms of biological role, efflux system for nickel and cobalt. The polypeptide is Nickel/cobalt efflux system RcnA (rcnA) (Escherichia coli O9:H4 (strain HS)).